An 83-amino-acid chain; its full sequence is Small ribosomal subunit protein eS21 (83 aa).

Belongs to the eukaryotic ribosomal protein eS21 family. As to quaternary structure, component of the 40S small ribosomal subunit.

It is found in the cytoplasm. The protein localises to the cytosol. It localises to the rough endoplasmic reticulum. The sequence is that of Small ribosomal subunit protein eS21 (RpS21) from Agriotes lineatus (Lined click beetle).